A 407-amino-acid polypeptide reads, in one-letter code: Heparan-sulfate 6-O-sulfotransferase 1-B (407 aa).

Residues 8–14 (MVERTSK) are Cytoplasmic-facing. Residues 15–35 (FLLIVVGSVFFMLILYQYVAP) form a helical; Signal-anchor for type II membrane protein membrane-spanning segment. Over 36–407 (GVINFGSPHG…DYMNHIINGW (372 aa)) the chain is Lumenal. A 3'-phosphoadenylyl sulfate-binding site is contributed by 92 to 100 (HIQKTGGTT). Substrate-binding positions include 122–123 (KK), R139, W144, and H149. H149 (proton acceptor) is an active-site residue. 3'-phosphoadenylyl sulfate-binding residues include R183 and S191. Substrate-binding residues include H195 and W202. N262 carries N-linked (GlcNAc...) asparagine glycosylation. 315 to 317 (MQY) provides a ligand contact to 3'-phosphoadenylyl sulfate. N-linked (GlcNAc...) asparagine glycosylation is present at N318. Residue 321–322 (RA) coordinates 3'-phosphoadenylyl sulfate. A glycan (N-linked (GlcNAc...) asparagine) is linked at N329.

This sequence belongs to the sulfotransferase 6 family. In terms of tissue distribution, during early somitogenesis, first expressed in floor plate and somites. During mid-somitogenesis, expressed strongly in somites and more weakly in eye and hindbrain. During late somitogenesis, expressed in eye, hindbrain and posterior somites. At 24 hours post-fertilization (hpf), expressed in lens, forebrain, hindbrain, otic vesicle, anterior spinal cord neurons and posterior somites. At 36 hpf, expressed in the retinal ciliary marginal zone, brain, pancreas and weakly in pectoral fin. At 48 hpf, expressed in the retinal ciliary marginal zone, retinal ganglion cells, rhombomeres, otic vesicle and weakly in pectoral fin.

The protein resides in the membrane. The catalysed reaction is alpha-D-glucosaminyl-[heparan sulfate](n) + 3'-phosphoadenylyl sulfate = 6-sulfo-alpha-D-glucosaminyl-[heparan sulfate](n) + adenosine 3',5'-bisphosphate + H(+). 6-O-sulfation enzyme which catalyzes the transfer of sulfate from 3'-phosphoadenosine 5'-phosphosulfate (PAPS) to position 6 of the N-sulfoglucosamine residue (GlcNS) of heparan sulfate. The protein is Heparan-sulfate 6-O-sulfotransferase 1-B of Danio rerio (Zebrafish).